The primary structure comprises 44 residues: Protein Tat (44 aa).

The tract at residues 1-44 is disordered; the sequence is APEDSQSHQVSLSKQPASQAGGDPTGPKESKKKVESETETDPVP. Over residues 7–18 the composition is skewed to polar residues; the sequence is SHQVSLSKQPAS. Lysine 14 participates in a covalent cross-link: Glycyl lysine isopeptide (Lys-Gly) (interchain with G-Cter in ubiquitin). The Cell attachment site signature appears at 21-23; it reads GGD. Residues 26-36 are compositionally biased toward basic and acidic residues; sequence GPKESKKKVES.

This sequence belongs to the lentiviruses Tat family. In terms of assembly, interacts with host CCNT1. Associates with the P-TEFb complex composed at least of Tat, P-TEFb (CDK9 and CCNT1), TAR RNA, RNA Pol II. Recruits the HATs CREBBP, TAF1/TFIID, EP300, PCAF and GCN5L2. Interacts with host KAT5/Tip60; this interaction targets the latter to degradation. Interacts with the host deacetylase SIRT1. Interacts with host capping enzyme RNGTT; this interaction stimulates RNGTT. Binds to host KDR, and to the host integrins ITGAV/ITGB3 and ITGA5/ITGB1. Interacts with host KPNB1/importin beta-1 without previous binding to KPNA1/importin alpha-1. Interacts with EIF2AK2. Interacts with host nucleosome assembly protein NAP1L1; this interaction may be required for the transport of Tat within the nucleus, since the two proteins interact at the nuclear rim. Interacts with host C1QBP/SF2P32; this interaction involves lysine-acetylated Tat. Interacts with the host chemokine receptors CCR2, CCR3 and CXCR4. Interacts with host DPP4/CD26; this interaction may trigger an anti-proliferative effect. Interacts with host LDLR. Interacts with the host extracellular matrix metalloproteinase MMP1. Interacts with host PRMT6; this interaction mediates Tat's methylation. Interacts with, and is ubiquitinated by MDM2/Hdm2. Interacts with host PSMC3 and HTATIP2. Interacts with STAB1; this interaction may overcome SATB1-mediated repression of IL2 and IL2RA (interleukin) in T cells by binding to the same domain than HDAC1. Interacts (when acetylated) with human CDK13, thereby increasing HIV-1 mRNA splicing and promoting the production of the doubly spliced HIV-1 protein Nef. Acetylation by EP300, CREBBP, GCN5L2/GCN5 and PCAF regulates the transactivation activity of Tat. Post-translationally, phosphorylated by EIF2AK2 on serine and threonine residues adjacent to the basic region important for TAR RNA binding and function. Phosphorylation of Tat by EIF2AK2 is dependent on the prior activation of EIF2AK2 by dsRNA. In terms of processing, asymmetrical arginine methylation by host PRMT6 seems to diminish the transactivation capacity of Tat and affects the interaction with host CCNT1. Polyubiquitination by MDM2 does not target Tat to degradation, but activates its transactivation function and fosters interaction with CCNT1 and TAR RNA.

The protein resides in the host nucleus. It is found in the host nucleolus. The protein localises to the host cytoplasm. It localises to the secreted. Its function is as follows. Transcriptional activator that increases RNA Pol II processivity, thereby increasing the level of full-length viral transcripts. Recognizes a hairpin structure at the 5'-LTR of the nascent viral mRNAs referred to as the transactivation responsive RNA element (TAR) and recruits the cyclin T1-CDK9 complex (P-TEFb complex) that will in turn hyperphosphorylate the RNA polymerase II to allow efficient elongation. The CDK9 component of P-TEFb and other Tat-activated kinases hyperphosphorylate the C-terminus of RNA Pol II that becomes stabilized and much more processive. Other factors such as HTATSF1/Tat-SF1, SUPT5H/SPT5, and HTATIP2 are also important for Tat's function. Besides its effect on RNA Pol II processivity, Tat induces chromatin remodeling of proviral genes by recruiting the histone acetyltransferases (HATs) CREBBP, EP300 and PCAF to the chromatin. This also contributes to the increase in proviral transcription rate, especially when the provirus integrates in transcriptionally silent region of the host genome. To ensure maximal activation of the LTR, Tat mediates nuclear translocation of NF-kappa-B by interacting with host RELA. Through its interaction with host TBP, Tat may also modulate transcription initiation. Tat can reactivate a latently infected cell by penetrating in it and transactivating its LTR promoter. In the cytoplasm, Tat is thought to act as a translational activator of HIV-1 mRNAs. Extracellular circulating Tat can be endocytosed by surrounding uninfected cells via the binding to several surface receptors such as CD26, CXCR4, heparan sulfate proteoglycans (HSPG) or LDLR. Neurons are rarely infected, but they internalize Tat via their LDLR. Endosomal low pH allows Tat to cross the endosome membrane to enter the cytosol and eventually further translocate into the nucleus, thereby inducing severe cell dysfunctions ranging from cell activation to cell death. Through its interaction with nuclear HATs, Tat is potentially able to control the acetylation-dependent cellular gene expression. Tat seems to inhibit the HAT activity of KAT5/Tip60 and TAF1, and consequently modify the expression of specific cellular genes. Modulates the expression of many cellular genes involved in cell survival, proliferation or in coding for cytokines (such as IL10) or cytokine receptors. May be involved in the derepression of host interleukin IL2 expression. Mediates the activation of cyclin-dependent kinases and dysregulation of microtubule network. Tat plays a role in T-cell and neurons apoptosis. Tat induced neurotoxicity and apoptosis probably contribute to neuroAIDS. Host extracellular matrix metalloproteinase MMP1 cleaves Tat and decreases Tat's mediated neurotoxicity. Circulating Tat also acts as a chemokine-like and/or growth factor-like molecule that binds to specific receptors on the surface of the cells, affecting many cellular pathways. In the vascular system, Tat binds to ITGAV/ITGB3 and ITGA5/ITGB1 integrins dimers at the surface of endothelial cells and competes with bFGF for heparin-binding sites, leading to an excess of soluble bFGF. Binds to KDR/VEGFR-2. All these Tat-mediated effects enhance angiogenesis in Kaposi's sarcoma lesions. The protein is Protein Tat of Human immunodeficiency virus type 1 group M subtype B (isolate BRVA) (HIV-1).